The sequence spans 194 residues: uncharacterized protein (194 aa).

The first 29 residues, 1–29 (MKKAFLVFLSVVLVTTVFLVKQQESVAQA), serve as a signal peptide directing secretion. Residues 104–131 (KVDELLKKAGQIVEEKVEAAKEIAASKD) are a coiled coil. Residues 149-171 (YFYYVSYVAAAGALILIILAIDI) form a helical membrane-spanning segment.

It is found in the membrane. This is an uncharacterized protein from Bacillus subtilis (strain 168).